The sequence spans 639 residues: tRNA-dihydrouridine(47) synthase [NAD(P)(+)]-like (639 aa).

Polar residues-rich tracts occupy residues 1 to 19 and 54 to 65; these read MAES…TVTQ and QTCSELSGNDAE. 2 disordered regions span residues 1 to 20 and 52 to 122; these read MAES…VTQK and DKQT…HSQF. Residues 66 to 85 are compositionally biased toward basic and acidic residues; the sequence is NTVRAEDAAEPEAKRIKLDD. Over residues 103–119 the composition is skewed to basic residues; that stretch reads EKKRARGQNKSRPHMKH. C3H1-type zinc fingers lie at residues 122–152 and 160–190; these read FEEN…HDVA and EDIR…HLGD. Residues 300–302 and Gln354 contribute to the FMN site; that span reads PLT. Cys385 functions as the Proton donor in the catalytic mechanism. FMN is bound by residues Lys424, His454, 486–488, and 509–510; these read NGD and AR.

It belongs to the Dus family. Dus3 subfamily. The cofactor is FMN.

The catalysed reaction is 5,6-dihydrouridine(47) in tRNA + NAD(+) = uridine(47) in tRNA + NADH + H(+). It carries out the reaction 5,6-dihydrouridine(47) in tRNA + NADP(+) = uridine(47) in tRNA + NADPH + H(+). It catalyses the reaction a 5,6-dihydrouridine in mRNA + NAD(+) = a uridine in mRNA + NADH + H(+). The enzyme catalyses a 5,6-dihydrouridine in mRNA + NADP(+) = a uridine in mRNA + NADPH + H(+). Its function is as follows. Catalyzes the synthesis of dihydrouridine, a modified base, in various RNAs, such as tRNAs, mRNAs and some long non-coding RNAs (lncRNAs). Mainly modifies the uridine in position 47 (U47) in the D-loop of most cytoplasmic tRNAs. Also able to mediate the formation of dihydrouridine in some mRNAs, thereby regulating their translation. This is tRNA-dihydrouridine(47) synthase [NAD(P)(+)]-like (dus3l) from Xenopus tropicalis (Western clawed frog).